We begin with the raw amino-acid sequence, 334 residues long: Tryptophan--tRNA ligase (334 aa).

ATP-binding positions include 11–13 (QPS) and 19–20 (GN). The short motif at 12–20 (PSGELTIGN) is the 'HIGH' region element. Residue aspartate 135 coordinates L-tryptophan. Residues 147-149 (GED), valine 186, and 195-199 (KMSKS) each bind ATP. The short motif at 195 to 199 (KMSKS) is the 'KMSKS' region element.

It belongs to the class-I aminoacyl-tRNA synthetase family. Homodimer.

The protein resides in the cytoplasm. It catalyses the reaction tRNA(Trp) + L-tryptophan + ATP = L-tryptophyl-tRNA(Trp) + AMP + diphosphate + H(+). Catalyzes the attachment of tryptophan to tRNA(Trp). This Shigella flexneri protein is Tryptophan--tRNA ligase.